The following is a 164-amino-acid chain: uncharacterized protein (164 aa).

Residues G46–L142 are disordered.

This is an uncharacterized protein from Caenorhabditis elegans.